Consider the following 725-residue polypeptide: Catalase-peroxidase (725 aa).

Polar residues-rich tracts occupy residues 1-12 and 23-32; these read MSTSNDPSNNAS and PKQSAGSGTA. The signal sequence occupies residues 1-20; it reads MSTSNDPSNNASAGKCPFHA. Residues 1–35 form a disordered region; the sequence is MSTSNDPSNNASAGKCPFHAETPKQSAGSGTANRD. Residues 105–226 constitute a cross-link (tryptophyl-tyrosyl-methioninium (Trp-Tyr) (with M-252)); that stretch reads WHGAGTYRTV…IGATEMGLIY (122 aa). His106 acts as the Proton acceptor in catalysis. A cross-link (tryptophyl-tyrosyl-methioninium (Tyr-Met) (with W-105)) is located at residues 226 to 252; the sequence is YVNPEGPNASGEPLSAAAAIRATFGNM. His267 serves as a coordination point for heme b.

The protein belongs to the peroxidase family. Peroxidase/catalase subfamily. In terms of assembly, homodimer or homotetramer. Heme b serves as cofactor. Post-translationally, formation of the three residue Trp-Tyr-Met cross-link is important for the catalase, but not the peroxidase activity of the enzyme.

The enzyme catalyses H2O2 + AH2 = A + 2 H2O. It catalyses the reaction 2 H2O2 = O2 + 2 H2O. Bifunctional enzyme with both catalase and broad-spectrum peroxidase activity. The sequence is that of Catalase-peroxidase from Klebsiella pneumoniae subsp. pneumoniae (strain ATCC 700721 / MGH 78578).